Reading from the N-terminus, the 254-residue chain is NAD-dependent protein deacetylase 1 (254 aa).

One can recognise a Deacetylase sirtuin-type domain in the interval 5–254; sequence ASDLRSGVER…GETLGPFVGN (250 aa). Residues Ala31, Thr35, Phe42, Arg43, Gln108, Ile110, Asp111, and His128 each coordinate NAD(+). Residue Phe42 coordinates nicotinamide. Positions 110 and 111 each coordinate nicotinamide. The active-site Proton acceptor is the His128. Zn(2+) contacts are provided by Cys136, Cys139, Cys160, and Cys163. Residues Ser201, Ser202, Asn226, Asp243, and Ile244 each coordinate NAD(+).

This sequence belongs to the sirtuin family. Class U subfamily. It depends on Zn(2+) as a cofactor.

Its subcellular location is the cytoplasm. The catalysed reaction is N(6)-acetyl-L-lysyl-[protein] + NAD(+) + H2O = 2''-O-acetyl-ADP-D-ribose + nicotinamide + L-lysyl-[protein]. Functionally, NAD-dependent protein deacetylase which modulates the activities of several enzymes which are inactive in their acetylated form. The sequence is that of NAD-dependent protein deacetylase 1 from Bradyrhizobium diazoefficiens (strain JCM 10833 / BCRC 13528 / IAM 13628 / NBRC 14792 / USDA 110).